The primary structure comprises 187 residues: Early E3 20.6 kDa glycoprotein (187 aa).

Residues Asn-30, Asn-73, Asn-117, Asn-134, and Asn-135 are each glycosylated (N-linked (GlcNAc...) asparagine; by host).

The protein belongs to the adenoviridae E3_20 family.

This is Early E3 20.6 kDa glycoprotein from Human adenovirus B serotype 11 (strain Slobiski) (HAdV-11).